A 594-amino-acid polypeptide reads, in one-letter code: Cytoplasmic polyadenylation element-binding protein 2 (594 aa).

The span at 72–90 shows a compositional bias: basic and acidic residues; it reads KEREKVDEEKEGVERREEN. 2 disordered regions span residues 72–91 and 367–388; these read KERE…EENG and GGGF…STSE. Over residues 367 to 378 the composition is skewed to gly residues; that stretch reads GGGFNSGSGSGN. The RRM domain occupies 458 to 540; it reads LVAFIGGVPR…KRVEIKPYFF (83 aa).

Functionally, cytoplasmic polyadenylation element binding protein that binds to and regulates the translation of specific mRNAs. The polypeptide is Cytoplasmic polyadenylation element-binding protein 2 (cpb-2) (Caenorhabditis japonica).